The sequence spans 46 residues: Apamin (46 aa).

An N-terminal signal peptide occupies residues 1 to 27 (MISMLRCIYLFLSVILITSYFVTPVMP). Disulfide bonds link Cys-28-Cys-38 and Cys-30-Cys-42. Residues 40 to 41 (RR) form an essential for toxin activity region. His-45 is modified (histidine amide).

In terms of tissue distribution, expressed by the venom gland.

The protein resides in the secreted. Functionally, toxin with unique selectivity to KCa2 channels. Potently blocks human, rat and mouse KCa2.2/KCNN2/SK2 channels (IC(50)=27-140 pM), and moderately blocks human and rat KCa2.3/KCNN3/SK3 channels (IC(50)=0.6-4 nM), and human (IC(50)=0.7-12 nM) and mouse (IC(50)=28 nM) KCa2.1/KCNN1/SK1 channels. Does not show any antimicrobial activity. In vivo, intracerebroventricular injection into rats of a dose of 1 ng results in neurodegeneration specifically in the Purkinje cells of the cerebellum, and induces seizures characterized by hypersensitivity to noise, loss of postural control, paroxystic jerking, and alternating periods of great agitation with tonic-clonic convulsions and periods of total prostration. When administered at high doses, exerts anti-inflammatory, anti-oxidative, anti-fibrotic and anti-apoptotic properties in several models of inflammatory disease, including gouty arthritis, atherosclerosis, atopic dermatitis and acute kidney injury. Down-regulates pro-inflammatory signaling pathways, such as the NF-kappaB and STAT3 pathways, probably by blocking SK channels such as KCa2.2/KCNN2/SK2 and/or KCa2.3/KCNN3/SK3 which are thought to be involved in promoting some inflammatory responses. For example in mouse and rat microglia cells, inhibits LPS-activated KCa2.2/KCNN2/SK2 channels and TLR4 expression leading to the down-regulation of the NF-kappaB, STAT, and MAPK/ERK signaling pathways and, as a consequence, decreases secretion of pro-inflammatory cytokines. This is Apamin from Apis mellifera (Honeybee).